The primary structure comprises 476 residues: Cysteine--tRNA ligase (476 aa).

A Zn(2+)-binding site is contributed by Cys28. Residues 30 to 40 carry the 'HIGH' region motif; that stretch reads VTTYDFCHIGH. Residues Cys215, His241, and Glu245 each contribute to the Zn(2+) site. Positions 273–277 match the 'KMSKS' region motif; sequence KMSKS. Lys276 serves as a coordination point for ATP.

This sequence belongs to the class-I aminoacyl-tRNA synthetase family. As to quaternary structure, monomer. Zn(2+) serves as cofactor.

It is found in the cytoplasm. The enzyme catalyses tRNA(Cys) + L-cysteine + ATP = L-cysteinyl-tRNA(Cys) + AMP + diphosphate. In Buchnera aphidicola subsp. Cinara cedri (strain Cc), this protein is Cysteine--tRNA ligase.